The primary structure comprises 444 residues: Vacuolar protein sorting-associated protein 4B (444 aa).

An MIT domain is found at 4–82; sequence TNTNLQKAID…KEYLKKKEKK (79 aa). Residues 19-82 are a coiled coil; it reads AQEDKAGNYE…KEYLKKKEKK (64 aa). The segment at 77–118 is disordered; the sequence is KKKEKKPQKPVKEEQSGPVDEKGNDSDGEAESDDPEKKKLQN. Residues 86-101 are compositionally biased toward basic and acidic residues; sequence PVKEEQSGPVDEKGND. A phosphoserine mark is found at Ser-102 and Ser-108. Residue 174–181 coordinates ATP; the sequence is GPPGTGKS. The residue at position 410 (Ser-410) is a Phosphoserine.

Belongs to the AAA ATPase family. As to quaternary structure, proposed to be monomeric or homodimeric in nucleotide-free form and to oligomerize upon binding to ATP to form two stacked hexameric or heptameric rings with a central pore through which ESCRT-III substrates are translocated in an ATP-dependent manner. In vitro, associates on the inside of a helical tubular structure formed by a CHMP2A-CHMP3 polymer. Interacts with CHMP1A, CHMP1B, CHMP4B and CHMP6. Interacts with CHMP2A. Interacts with VPS4A; the interaction suggests a heteromeric assembly with VPS4A. Interacts with VTA1. As to expression, high level expression seen in the kidney. It is also expressed in the heart, brain, spleen, lung, liver, skeletal muscle, and testis.

It is found in the late endosome membrane. The enzyme catalyses ATP + H2O = ADP + phosphate + H(+). Involved in late steps of the endosomal multivesicular bodies (MVB) pathway. Recognizes membrane-associated ESCRT-III assemblies and catalyzes their disassembly, possibly in combination with membrane fission. Redistributes the ESCRT-III components to the cytoplasm for further rounds of MVB sorting. MVBs contain intraluminal vesicles (ILVs) that are generated by invagination and scission from the limiting membrane of the endosome and mostly are delivered to lysosomes enabling degradation of membrane proteins, such as stimulated growth factor receptors, lysosomal enzymes and lipids. VPS4A/B are required for the exosomal release of SDCBP, CD63 and syndecan. Functionally, (Microbial infection) In conjunction with the ESCRT machinery also appears to function in topologically equivalent membrane fission events, such as the terminal stages of cytokinesis and enveloped virus budding (lentiviruses). The protein is Vacuolar protein sorting-associated protein 4B of Mus musculus (Mouse).